An 880-amino-acid chain; its full sequence is Alanine--tRNA ligase (880 aa).

Zn(2+) contacts are provided by His567, His571, Cys669, and His673.

This sequence belongs to the class-II aminoacyl-tRNA synthetase family. The cofactor is Zn(2+).

Its subcellular location is the cytoplasm. The enzyme catalyses tRNA(Ala) + L-alanine + ATP = L-alanyl-tRNA(Ala) + AMP + diphosphate. Its function is as follows. Catalyzes the attachment of alanine to tRNA(Ala) in a two-step reaction: alanine is first activated by ATP to form Ala-AMP and then transferred to the acceptor end of tRNA(Ala). Also edits incorrectly charged Ser-tRNA(Ala) and Gly-tRNA(Ala) via its editing domain. In Bacillus thuringiensis (strain Al Hakam), this protein is Alanine--tRNA ligase.